Consider the following 224-residue polypeptide: Glutathione S-transferase U28 (224 aa).

The GST N-terminal domain maps to 6–85 (SKVVVLDFWA…YIDETWTDAA (80 aa)). Residues 16 to 17 (SP), 42 to 43 (NK), 56 to 57 (KV), and 69 to 70 (ES) contribute to the glutathione site. The region spanning 91–217 (DPQSRATARF…EKVYQQVLKL (127 aa)) is the GST C-terminal domain. Residue Thr154 is modified to Phosphothreonine.

This sequence belongs to the GST superfamily. Tau family.

Its subcellular location is the cytoplasm. It localises to the cytosol. The catalysed reaction is RX + glutathione = an S-substituted glutathione + a halide anion + H(+). Its function is as follows. May be involved in the conjugation of reduced glutathione to a wide number of exogenous and endogenous hydrophobic electrophiles and have a detoxification role against certain herbicides. The chain is Glutathione S-transferase U28 (GSTU28) from Arabidopsis thaliana (Mouse-ear cress).